The chain runs to 351 residues: Protein-glutamate methylesterase/protein-glutamine glutaminase 2 (351 aa).

Residues 4 to 121 (KVLVVDDSTL…PQGFNEYQDL (118 aa)) form the Response regulatory domain. Asp55 is subject to 4-aspartylphosphate. The 193-residue stretch at 156 to 348 (RTVNTQLVAI…DKLLQYLASV (193 aa)) folds into the CheB-type methylesterase domain. Catalysis depends on residues Ser168, His194, and Asp290.

This sequence belongs to the CheB family. Post-translationally, phosphorylated by CheA. Phosphorylation of the N-terminal regulatory domain activates the methylesterase activity.

The protein localises to the cytoplasm. It carries out the reaction [protein]-L-glutamate 5-O-methyl ester + H2O = L-glutamyl-[protein] + methanol + H(+). The enzyme catalyses L-glutaminyl-[protein] + H2O = L-glutamyl-[protein] + NH4(+). Functionally, involved in chemotaxis. Part of a chemotaxis signal transduction system that modulates chemotaxis in response to various stimuli. Catalyzes the demethylation of specific methylglutamate residues introduced into the chemoreceptors (methyl-accepting chemotaxis proteins or MCP) by CheR. Also mediates the irreversible deamidation of specific glutamine residues to glutamic acid. The protein is Protein-glutamate methylesterase/protein-glutamine glutaminase 2 of Shewanella oneidensis (strain ATCC 700550 / JCM 31522 / CIP 106686 / LMG 19005 / NCIMB 14063 / MR-1).